A 308-amino-acid polypeptide reads, in one-letter code: MDWKGRDVISIRDFSKEDIEIVLSTAERLEKELKEKGQLEYARGKILATLFFEPSTRTRLSFESAMHRLGGAVIGFAEASTSSVKKGESLADTIKTVEQYSDVIVIRHPKEGAARLAAEVAEIPVINAGDGSNQHPTQTLLDLYTIRKEFGKIDGLKIGLLGDLKYGRTVHSLAEALAYYDVELYLISPELLRMPRHIVEELREKGVTVYETSDLMSVIGELDVLYVTRIQKERFPDEQEYLKVRGSYQVNLQVLSKAKETLKVMHPLPRVDEIHPEVDKTKHAIYFKQVFNGIPVRMALLGLVLGVI.

Carbamoyl phosphate contacts are provided by Arg57 and Thr58. Lys86 is a binding site for L-aspartate. The carbamoyl phosphate site is built by Arg107, His135, and Gln138. Arg168 and Arg229 together coordinate L-aspartate. Positions 268 and 269 each coordinate carbamoyl phosphate.

The protein belongs to the aspartate/ornithine carbamoyltransferase superfamily. ATCase family. Heterooligomer of catalytic and regulatory chains.

The catalysed reaction is carbamoyl phosphate + L-aspartate = N-carbamoyl-L-aspartate + phosphate + H(+). It functions in the pathway pyrimidine metabolism; UMP biosynthesis via de novo pathway; (S)-dihydroorotate from bicarbonate: step 2/3. Its function is as follows. Catalyzes the condensation of carbamoyl phosphate and aspartate to form carbamoyl aspartate and inorganic phosphate, the committed step in the de novo pyrimidine nucleotide biosynthesis pathway. This chain is Aspartate carbamoyltransferase catalytic subunit, found in Pyrococcus furiosus (strain ATCC 43587 / DSM 3638 / JCM 8422 / Vc1).